The following is a 369-amino-acid chain: Glutamate 5-kinase (369 aa).

ATP is bound at residue K11. S51, D138, and N150 together coordinate substrate. Residues 170–171 and 212–218 contribute to the ATP site; these read TD and TGGMATK. The region spanning 277–355 is the PUA domain; that stretch reads KGSIVIDEGA…QDIYAVLGYE (79 aa).

Belongs to the glutamate 5-kinase family.

The protein localises to the cytoplasm. The catalysed reaction is L-glutamate + ATP = L-glutamyl 5-phosphate + ADP. It functions in the pathway amino-acid biosynthesis; L-proline biosynthesis; L-glutamate 5-semialdehyde from L-glutamate: step 1/2. Its function is as follows. Catalyzes the transfer of a phosphate group to glutamate to form L-glutamate 5-phosphate. In Aliivibrio fischeri (strain ATCC 700601 / ES114) (Vibrio fischeri), this protein is Glutamate 5-kinase.